The sequence spans 424 residues: Enolase (424 aa).

Residue Gln-165 coordinates (2R)-2-phosphoglycerate. The active-site Proton donor is Glu-207. 3 residues coordinate Mg(2+): Asp-244, Glu-283, and Asp-310. Lys-335, Arg-364, Ser-365, and Lys-386 together coordinate (2R)-2-phosphoglycerate. Lys-335 acts as the Proton acceptor in catalysis.

Belongs to the enolase family. The cofactor is Mg(2+).

Its subcellular location is the cytoplasm. The protein localises to the secreted. It localises to the cell surface. The enzyme catalyses (2R)-2-phosphoglycerate = phosphoenolpyruvate + H2O. Its pathway is carbohydrate degradation; glycolysis; pyruvate from D-glyceraldehyde 3-phosphate: step 4/5. Catalyzes the reversible conversion of 2-phosphoglycerate (2-PG) into phosphoenolpyruvate (PEP). It is essential for the degradation of carbohydrates via glycolysis. The chain is Enolase from Chlamydia muridarum (strain MoPn / Nigg).